The sequence spans 145 residues: D-aminoacyl-tRNA deacylase (145 aa).

Positions 137–138 (GP) match the Gly-cisPro motif, important for rejection of L-amino acids motif.

The protein belongs to the DTD family. Homodimer.

The protein localises to the cytoplasm. It carries out the reaction glycyl-tRNA(Ala) + H2O = tRNA(Ala) + glycine + H(+). The catalysed reaction is a D-aminoacyl-tRNA + H2O = a tRNA + a D-alpha-amino acid + H(+). Its function is as follows. An aminoacyl-tRNA editing enzyme that deacylates mischarged D-aminoacyl-tRNAs. Also deacylates mischarged glycyl-tRNA(Ala), protecting cells against glycine mischarging by AlaRS. Acts via tRNA-based rather than protein-based catalysis; rejects L-amino acids rather than detecting D-amino acids in the active site. By recycling D-aminoacyl-tRNA to D-amino acids and free tRNA molecules, this enzyme counteracts the toxicity associated with the formation of D-aminoacyl-tRNA entities in vivo and helps enforce protein L-homochirality. The sequence is that of D-aminoacyl-tRNA deacylase from Deinococcus radiodurans (strain ATCC 13939 / DSM 20539 / JCM 16871 / CCUG 27074 / LMG 4051 / NBRC 15346 / NCIMB 9279 / VKM B-1422 / R1).